Here is a 418-residue protein sequence, read N- to C-terminus: Glucose-1-phosphate adenylyltransferase (418 aa).

Residues Tyr-107, Gly-172, 187-188, and Ser-205 contribute to the alpha-D-glucose 1-phosphate site; that span reads EK.

The protein belongs to the bacterial/plant glucose-1-phosphate adenylyltransferase family. Homotetramer.

It carries out the reaction alpha-D-glucose 1-phosphate + ATP + H(+) = ADP-alpha-D-glucose + diphosphate. The protein operates within glycan biosynthesis; glycogen biosynthesis. Involved in the biosynthesis of ADP-glucose, a building block required for the elongation reactions to produce glycogen. Catalyzes the reaction between ATP and alpha-D-glucose 1-phosphate (G1P) to produce pyrophosphate and ADP-Glc. This chain is Glucose-1-phosphate adenylyltransferase, found in Gemmatimonas aurantiaca (strain DSM 14586 / JCM 11422 / NBRC 100505 / T-27).